Consider the following 76-residue polypeptide: MAPSALLRPLSRLLAPARLPSGPSVRSKFYVREPPNAKPDWLKVGFTLGTTVFLWIYLIKQHNEDILEYKRRNGLE.

The transit peptide at Met-1–Ser-27 directs the protein to the mitochondrion. Residues Trp-41–Ile-59 traverse the membrane as a helical segment.

Belongs to the complex I NDUFC1 subunit family. As to quaternary structure, complex I is composed of 45 different subunits.

It localises to the mitochondrion inner membrane. Functionally, accessory subunit of the mitochondrial membrane respiratory chain NADH dehydrogenase (Complex I), that is believed not to be involved in catalysis. Complex I functions in the transfer of electrons from NADH to the respiratory chain. The immediate electron acceptor for the enzyme is believed to be ubiquinone. The protein is NADH dehydrogenase [ubiquinone] 1 subunit C1, mitochondrial (NDUFC1) of Homo sapiens (Human).